Consider the following 832-residue polypeptide: Thymine dioxygenase JBP1-A (832 aa).

Over residues 1 to 12 (MKQKRGKQDVKM) the composition is skewed to basic and acidic residues. Positions 1-24 (MKQKRGKQDVKMLESAPPQLLPKK) are disordered. The tract at residues 80-282 (VVGGVFLPGA…RLTCVCYYRA (203 aa)) is thymine dioxygenase. His-207, Asp-209, and His-257 together coordinate Fe cation. Arg-273 lines the 2-oxoglutarate pocket. Residues 409–578 (LGGALKAAEE…IEEARRRGSS (170 aa)) are DNA-binding JBP1 domain.

The protein belongs to the TET family. JBP1 subfamily. As to quaternary structure, monomer. Binds to DNA as a monomer. The cofactor is Fe(2+).

The protein resides in the nucleus. The catalysed reaction is thymine + 2-oxoglutarate + O2 = 5-hydroxymethyluracil + succinate + CO2. Functionally, dioxygenase that catalyzes the first step of DNA base J (beta-d-glucosyl-HOMedU) biosynthesis by converting thymine to 5-hydroxymethyluracil (HOMedU). DNA base J is a hypermodified thymidine residue found in the genome of kinetoplastid parasites, which is localized primarily to repetitive DNA, namely the telomeres, and is implicated in the regulation of antigenic variation. Also specifically binds to base J-containing DNA (J-DNA). Involved in propagation and maintenance of DNA base J synthesis initiated by JBP2 by specifically binding already synthesized DNA base J and propagating J synthesis. Thymine dioxygenase activity and J-DNA-binding are independent functions. This chain is Thymine dioxygenase JBP1-A (JBP1A), found in Trypanosoma cruzi (strain CL Brener).